A 299-amino-acid chain; its full sequence is 11-beta-hydroxysteroid dehydrogenase-like 4A (299 aa).

A helical; Signal-anchor for type II membrane protein transmembrane segment spans residues 10 to 30; that stretch reads ILLPIVTVSFLLVFMPFSIFF. Residues 54–80 and D105 each bind NADP(+); that span reads GSSSGIGEHLAYEYARRGAYLTLVARR. Residue S184 participates in substrate binding. The Proton acceptor role is filled by Y197. NADP(+) is bound by residues 197 to 201 and K201; that span reads YAASK.

The protein belongs to the short-chain dehydrogenases/reductases (SDR) family.

It localises to the membrane. The protein is 11-beta-hydroxysteroid dehydrogenase-like 4A (HSD4) of Arabidopsis thaliana (Mouse-ear cress).